Here is a 213-residue protein sequence, read N- to C-terminus: 2-dehydro-3-deoxy-phosphogluconate aldolase (213 aa).

Glu-45 functions as the Proton acceptor in the catalytic mechanism. Pyruvate is bound by residues Arg-49, Thr-73, and Lys-133. Lys-133 acts as the Schiff-base intermediate with substrate in catalysis.

The protein belongs to the KHG/KDPG aldolase family. Homotrimer.

Its subcellular location is the cytoplasm. It catalyses the reaction 2-dehydro-3-deoxy-6-phospho-D-gluconate = D-glyceraldehyde 3-phosphate + pyruvate. It participates in carbohydrate acid metabolism; 2-dehydro-3-deoxy-D-gluconate degradation; D-glyceraldehyde 3-phosphate and pyruvate from 2-dehydro-3-deoxy-D-gluconate: step 2/2. In terms of biological role, involved in the degradation of glucose via the Entner-Doudoroff pathway. Catalyzes the reversible, stereospecific retro-aldol cleavage of 2-keto-3-deoxy-6-phosphogluconate (KDPG) to pyruvate and D-glyceraldehyde-3-phosphate. This is 2-dehydro-3-deoxy-phosphogluconate aldolase (eda) from Dickeya dadantii (strain 3937) (Erwinia chrysanthemi (strain 3937)).